The primary structure comprises 289 residues: Protease HtpX homolog (289 aa).

2 consecutive transmembrane segments (helical) span residues 10–30 (TAAL…VIGS) and 34–54 (STTP…YGYW). His-138 lines the Zn(2+) pocket. Glu-139 is an active-site residue. His-142 provides a ligand contact to Zn(2+). A run of 2 helical transmembrane segments spans residues 153-173 (VAAA…IFGG) and 182-202 (LAVM…QSAI). Zn(2+) is bound at residue Glu-207.

Belongs to the peptidase M48B family. Requires Zn(2+) as cofactor.

Its subcellular location is the cell membrane. The polypeptide is Protease HtpX homolog (Arthrobacter sp. (strain FB24)).